The following is a 201-amino-acid chain: Peroxiredoxin-2F, mitochondrial (201 aa).

The N-terminal 30 residues, 1 to 30, are a transit peptide targeting the mitochondrion; the sequence is MAMSILKLRNLSALRSAANSARIGVSSRGF. T37 carries the phosphothreonine modification. Positions 37-201 constitute a Thioredoxin domain; the sequence is TDITSAAPGV…TGAEVILGQI (165 aa). Residue C89 is the Cysteine sulfenic acid (-SOH) intermediate of the active site. Residue S149 is modified to Phosphoserine.

The protein belongs to the peroxiredoxin family. Prx5 subfamily. In terms of assembly, monomer. In terms of tissue distribution, expressed in the whole plant.

The protein localises to the mitochondrion matrix. The enzyme catalyses [glutaredoxin]-dithiol + a hydroperoxide = [glutaredoxin]-disulfide + an alcohol + H2O. Thiol-specific peroxidase that catalyzes the reduction of hydrogen peroxide and organic hydroperoxides to water and alcohols, respectively. Plays a role in cell protection against oxidative stress by detoxifying peroxides. Reduces preferentially hydrogen peroxide rather than alkyl peroxides. May be involved in mitochondrial redox homeostasis. This Arabidopsis thaliana (Mouse-ear cress) protein is Peroxiredoxin-2F, mitochondrial (PRXIIF).